We begin with the raw amino-acid sequence, 299 residues long: GTPase Era (299 aa).

An Era-type G domain is found at 4–171 (KSGFVAILGR…VDILSENLEE (168 aa)). A G1 region spans residues 12–19 (GRPNVGKS). 12-19 (GRPNVGKS) lines the GTP pocket. The G2 stretch occupies residues 38-42 (QTTRN). The tract at residues 59–62 (DTPG) is G3. Residues 59-63 (DTPGI) and 121-124 (NKID) each bind GTP. Residues 121 to 124 (NKID) form a G4 region. The G5 stretch occupies residues 150 to 152 (ISA). In terms of domain architecture, KH type-2 spans 202–280 (TREEIPHSVA…FLETWVKVKK (79 aa)).

The protein belongs to the TRAFAC class TrmE-Era-EngA-EngB-Septin-like GTPase superfamily. Era GTPase family. In terms of assembly, monomer.

It is found in the cytoplasm. It localises to the cell membrane. In terms of biological role, an essential GTPase that binds both GDP and GTP, with rapid nucleotide exchange. Plays a role in 16S rRNA processing and 30S ribosomal subunit biogenesis and possibly also in cell cycle regulation and energy metabolism. This Streptococcus gordonii (strain Challis / ATCC 35105 / BCRC 15272 / CH1 / DL1 / V288) protein is GTPase Era.